The following is a 33-amino-acid chain: VTCFCRRRGCASRERHIGYCRFGNTIYRLCCRR.

Cystine bridges form between Cys-3-Cys-31, Cys-5-Cys-20, and Cys-10-Cys-30.

Belongs to the alpha-defensin family.

Its subcellular location is the secreted. Its function is as follows. Anti-fungal and bactericidal activity, greater against Gram-positive bacteria. This is Neutrophil defensin 1 from Mesocricetus auratus (Golden hamster).